Reading from the N-terminus, the 312-residue chain is Small ribosomal subunit protein uS2 (312 aa).

Residues 232–312 are disordered; it reads RASGAAERDE…AAPEGEAAAE (81 aa). Basic and acidic residues predominate over residues 245 to 284; it reads REGRDDRGDRRDDRRGPRRGDRRDDRRDRGGDRGGDRRGP. Over residues 291-312 the composition is skewed to low complexity; it reads AAPVASAEPAAEAAPEGEAAAE.

The protein belongs to the universal ribosomal protein uS2 family.

The chain is Small ribosomal subunit protein uS2 from Myxococcus xanthus (strain DK1622).